We begin with the raw amino-acid sequence, 199 residues long: Probable cobalt-precorrin-6B C(15)-methyltransferase (decarboxylating) (199 aa).

S-adenosyl-L-methionine is bound by residues threonine 24, 48–52 (GCGTG), aspartate 72, and alanine 101.

Belongs to the methyltransferase superfamily. Archaeal-type CbiT family.

The enzyme catalyses Co-precorrin-6B + S-adenosyl-L-methionine = Co-precorrin-7 + S-adenosyl-L-homocysteine + CO2. Its pathway is cofactor biosynthesis; adenosylcobalamin biosynthesis; cob(II)yrinate a,c-diamide from sirohydrochlorin (anaerobic route): step 8/10. Functionally, catalyzes the methylation of C-15 in cobalt-precorrin-6B followed by the decarboxylation of C-12 to form cobalt-precorrin-7. The chain is Probable cobalt-precorrin-6B C(15)-methyltransferase (decarboxylating) from Saccharolobus solfataricus (strain ATCC 35092 / DSM 1617 / JCM 11322 / P2) (Sulfolobus solfataricus).